Consider the following 177-residue polypeptide: Alkyl hydroperoxide reductase AhpD (177 aa).

Cys-131 functions as the Proton donor in the catalytic mechanism. The cysteines at positions 131 and 134 are disulfide-linked. Residue Cys-134 is the Cysteine sulfenic acid (-SOH) intermediate of the active site.

Belongs to the AhpD family. Homotrimer.

It catalyses the reaction N(6)-[(R)-dihydrolipoyl]-L-lysyl-[lipoyl-carrier protein] + a hydroperoxide = N(6)-[(R)-lipoyl]-L-lysyl-[lipoyl-carrier protein] + an alcohol + H2O. Its function is as follows. Antioxidant protein with alkyl hydroperoxidase activity. Required for the reduction of the AhpC active site cysteine residues and for the regeneration of the AhpC enzyme activity. This chain is Alkyl hydroperoxide reductase AhpD, found in Streptomyces griseus subsp. griseus (strain JCM 4626 / CBS 651.72 / NBRC 13350 / KCC S-0626 / ISP 5235).